The following is a 388-amino-acid chain: Chorismate synthase (388 aa).

Residues Arg39 and Arg45 each contribute to the NADP(+) site. Residues 130–132 (RSS), 251–252 (NA), Gly296, 311–315 (KPIPT), and Arg337 each bind FMN.

This sequence belongs to the chorismate synthase family. Homotetramer. It depends on FMNH2 as a cofactor.

It carries out the reaction 5-O-(1-carboxyvinyl)-3-phosphoshikimate = chorismate + phosphate. It participates in metabolic intermediate biosynthesis; chorismate biosynthesis; chorismate from D-erythrose 4-phosphate and phosphoenolpyruvate: step 7/7. Functionally, catalyzes the anti-1,4-elimination of the C-3 phosphate and the C-6 proR hydrogen from 5-enolpyruvylshikimate-3-phosphate (EPSP) to yield chorismate, which is the branch point compound that serves as the starting substrate for the three terminal pathways of aromatic amino acid biosynthesis. This reaction introduces a second double bond into the aromatic ring system. The chain is Chorismate synthase from Streptococcus suis (strain 98HAH33).